The following is a 482-amino-acid chain: ATP synthase subunit beta (482 aa).

168 to 175 (GGAGVGKT) lines the ATP pocket.

This sequence belongs to the ATPase alpha/beta chains family. As to quaternary structure, F-type ATPases have 2 components, CF(1) - the catalytic core - and CF(0) - the membrane proton channel. CF(1) has five subunits: alpha(3), beta(3), gamma(1), delta(1), epsilon(1). CF(0) has three main subunits: a(1), b(2) and c(9-12). The alpha and beta chains form an alternating ring which encloses part of the gamma chain. CF(1) is attached to CF(0) by a central stalk formed by the gamma and epsilon chains, while a peripheral stalk is formed by the delta and b chains.

The protein resides in the cell membrane. It catalyses the reaction ATP + H2O + 4 H(+)(in) = ADP + phosphate + 5 H(+)(out). Functionally, produces ATP from ADP in the presence of a proton gradient across the membrane. The catalytic sites are hosted primarily by the beta subunits. In Corynebacterium urealyticum (strain ATCC 43042 / DSM 7109), this protein is ATP synthase subunit beta.